We begin with the raw amino-acid sequence, 256 residues long: Small ribosomal subunit protein eS1 (256 aa).

Residues 1–18 (MAVGKNKRLSKGKKGVKK) show a composition bias toward basic residues. The interval 1 to 20 (MAVGKNKRLSKGKKGVKKRT) is disordered. Residue alanine 2 is modified to N-acetylalanine; partial.

Belongs to the eukaryotic ribosomal protein eS1 family. Component of the small ribosomal subunit. Mature ribosomes consist of a small (40S) and a large (60S) subunit. The 40S subunit contains about 33 different proteins and 1 molecule of RNA (18S). The 60S subunit contains about 49 different proteins and 3 molecules of RNA (25S, 5.8S and 5S).

The protein resides in the cytoplasm. In Aspergillus clavatus (strain ATCC 1007 / CBS 513.65 / DSM 816 / NCTC 3887 / NRRL 1 / QM 1276 / 107), this protein is Small ribosomal subunit protein eS1 (rps1).